The sequence spans 265 residues: R-spondin-1 (265 aa).

The signal sequence occupies residues 1–20 (MRLGLCVVALVLSWTHIAVG). 2 FU repeats span residues 34-85 (AEGS…GYFD) and 91-135 (MNKC…GSTA). Cystine bridges form between Cys40–Cys47, Cys44–Cys53, Cys56–Cys75, Cys79–Cys94, Cys97–Cys105, Cys102–Cys111, Cys114–Cys125, Cys129–Cys142, Cys148–Cys190, Cys159–Cys166, and Cys199–Cys206. Asn137 carries an N-linked (GlcNAc...) asparagine glycan. In terms of domain architecture, TSP type-1 spans 147-207 (QCEMSEWSPW…KCTVRRTPCP (61 aa)). Trp153 carries a C-linked (Man) tryptophan glycan. Residue Trp156 is glycosylated (C-linked (Man) tryptophan; by DPY19L3). 2 disordered regions span residues 173–192 (EERTRRVLHAPGGDHTTCSD) and 201–265 (VRRT…TWAQ). The segment covering 245 to 257 (QQQPQPGTTGPLT) has biased composition (low complexity).

The protein belongs to the R-spondin family. In terms of assembly, interacts with ZNRF3; promoting indirect interaction between ZNRF3 and LGR4 and membrane clearance of ZNRF3. Identified in a complex composed of RNF43, LGR5 and RSPO1. Interacts with the extracellular domain of FZD8 and LRP6. It however does not form a ternary complex with FZD8 and LRP6. Interacts with WNT1. Binds heparin. Interacts with LGR4, LGR5 and LGR6. Interacts (via FU repeats) with KREM1. Post-translationally, C-, and N-glycosylated. N-glycosylation at Asn-137, negatively influences its secretion and enhancing effect on Wnt/beta-catenin signaling. C-mannosylation at Trp-156 by DPY19L3 is required for its secretion an regulates the enhancing activity of Wnt signaling. Expressed in the dorsal part of the neural tube on 10 and 12 dpc, especially in the boundary region between roof plate and neuroepithelium. This expression is enhanced in the rostral part. Also expressed in other tissues such as truncal region neighboring forelimbs and mesenchymal tissues around the nasal cavity.

The protein localises to the secreted. Its subcellular location is the nucleus. Its function is as follows. Activator of the canonical Wnt signaling pathway by acting as a ligand for LGR4-6 receptors. Upon binding to LGR4-6 (LGR4, LGR5 or LGR6), LGR4-6 associate with phosphorylated LRP6 and frizzled receptors that are activated by extracellular Wnt receptors, triggering the canonical Wnt signaling pathway to increase expression of target genes. Also regulates the canonical Wnt/beta-catenin-dependent pathway and non-canonical Wnt signaling by acting as an inhibitor of ZNRF3, an important regulator of the Wnt signaling pathway. Acts as a ligand for frizzled FZD8 and LRP6. May negatively regulate the TGF-beta pathway. Has a essential roles in ovary determination. Regulates Wnt signaling by antagonizing DKK1/KREM1-mediated internalization of LRP6 through an interaction with KREM1. The sequence is that of R-spondin-1 (Rspo1) from Mus musculus (Mouse).